Consider the following 576-residue polypeptide: Proline--tRNA ligase (576 aa).

The protein belongs to the class-II aminoacyl-tRNA synthetase family. ProS type 1 subfamily. In terms of assembly, homodimer.

Its subcellular location is the cytoplasm. The enzyme catalyses tRNA(Pro) + L-proline + ATP = L-prolyl-tRNA(Pro) + AMP + diphosphate. Its function is as follows. Catalyzes the attachment of proline to tRNA(Pro) in a two-step reaction: proline is first activated by ATP to form Pro-AMP and then transferred to the acceptor end of tRNA(Pro). As ProRS can inadvertently accommodate and process non-cognate amino acids such as alanine and cysteine, to avoid such errors it has two additional distinct editing activities against alanine. One activity is designated as 'pretransfer' editing and involves the tRNA(Pro)-independent hydrolysis of activated Ala-AMP. The other activity is designated 'posttransfer' editing and involves deacylation of mischarged Ala-tRNA(Pro). The misacylated Cys-tRNA(Pro) is not edited by ProRS. The protein is Proline--tRNA ligase of Bordetella petrii (strain ATCC BAA-461 / DSM 12804 / CCUG 43448).